The chain runs to 232 residues: Orotate phosphoribosyltransferase (232 aa).

5-phospho-alpha-D-ribose 1-diphosphate contacts are provided by residues Arg-107, Lys-108, Lys-111, His-113, and Glu-133–Ser-141. Orotate is bound at residue Thr-137.

This sequence belongs to the purine/pyrimidine phosphoribosyltransferase family. PyrE subfamily. As to quaternary structure, homodimer. Requires Mg(2+) as cofactor.

It catalyses the reaction orotidine 5'-phosphate + diphosphate = orotate + 5-phospho-alpha-D-ribose 1-diphosphate. It functions in the pathway pyrimidine metabolism; UMP biosynthesis via de novo pathway; UMP from orotate: step 1/2. Its function is as follows. Catalyzes the transfer of a ribosyl phosphate group from 5-phosphoribose 1-diphosphate to orotate, leading to the formation of orotidine monophosphate (OMP). This chain is Orotate phosphoribosyltransferase, found in Rhizobium meliloti (strain 1021) (Ensifer meliloti).